We begin with the raw amino-acid sequence, 1702 residues long: Immunoglobulin A1 protease autotransporter (1702 aa).

Residues 1–25 (MLNKKFKLNFIALTVAYALTPYTEA) form the signal peptide. In terms of domain architecture, Peptidase S6 spans 26–332 (ALVRDDVDYQ…NIYKPEFAKT (307 aa)). Residue serine 288 is part of the active site. Positions 991 to 1411 (VEKRNQTVDT…GSDRSTVALR (421 aa)) are disordered. A compositionally biased stretch (polar residues) spans 997–1021 (TVDTTNITTPNNIQADVPSVPSNNE). Positions 1037–1047 (TPSETTETVAE) are enriched in low complexity. A compositionally biased stretch (basic and acidic residues) spans 1049–1061 (SKQESKTVEKNEQ). The span at 1082–1095 (KANTQTNEVAQSGS) shows a compositional bias: polar residues. 2 stretches are compositionally biased toward basic and acidic residues: residues 1104–1132 (EIKETAKVEKEEKAKVEKEEKAKVEKDEI) and 1150–1162 (APKEVSTDTKVEE). Tandem repeats lie at residues 1109 to 1116 (AKVEKEEK) and 1117 to 1124 (AKVEKEEK). The segment at 1109-1124 (AKVEKEEKAKVEKEEK) is 2 X 8 AA tandem repeats of A-K-V-E-K-E-E-K. 2 stretches are compositionally biased toward polar residues: residues 1163-1186 (TQVQAQPQTQSTTVAAAEATSPNS) and 1207-1218 (VSKNQTENTTDQ). Residues 1219–1234 (PTEREKTAKVETEKTQ) are compositionally biased toward basic and acidic residues. Composition is skewed to polar residues over residues 1235–1255 (EPPQVASQASPKQEQSETVQP), 1263–1305 (NVPT…TAIT), and 1316–1341 (TETAASTEDASQHKANTVADNSVANN). Positions 1360 to 1378 (ETSAEETTAASTDETTIAD) are enriched in low complexity. Positions 1382–1392 (RSKPNRRSRRS) are enriched in basic residues. Positions 1450 to 1702 (NNEGQYNVWV…TAELKLSFSF (253 aa)) constitute an Autotransporter domain.

It is found in the periplasm. The protein localises to the secreted. Its subcellular location is the cell surface. The protein resides in the cell outer membrane. It carries out the reaction Cleavage of immunoglobulin A molecules at certain Pro-|-Xaa bonds in the hinge region. No small molecule substrates are known.. In terms of biological role, virulence factor; cleaves host immunoglobulin A producing intact Fc and Fab fragments. The protein is Immunoglobulin A1 protease autotransporter (iga) of Haemophilus influenzae.